The primary structure comprises 334 residues: Glycerol-3-phosphate dehydrogenase [NAD(P)+] (334 aa).

NADPH is bound by residues tryptophan 14, arginine 34, and lysine 107. Positions 107 and 135 each coordinate sn-glycerol 3-phosphate. Residue alanine 139 coordinates NADPH. Positions 190, 243, 253, 254, and 255 each coordinate sn-glycerol 3-phosphate. Lysine 190 acts as the Proton acceptor in catalysis. Position 254 (arginine 254) interacts with NADPH. The NADPH site is built by valine 272 and glutamate 273.

Belongs to the NAD-dependent glycerol-3-phosphate dehydrogenase family.

The protein localises to the cytoplasm. The enzyme catalyses sn-glycerol 3-phosphate + NAD(+) = dihydroxyacetone phosphate + NADH + H(+). It catalyses the reaction sn-glycerol 3-phosphate + NADP(+) = dihydroxyacetone phosphate + NADPH + H(+). It functions in the pathway membrane lipid metabolism; glycerophospholipid metabolism. Functionally, catalyzes the reduction of the glycolytic intermediate dihydroxyacetone phosphate (DHAP) to sn-glycerol 3-phosphate (G3P), the key precursor for phospholipid synthesis. In Neorickettsia sennetsu (strain ATCC VR-367 / Miyayama) (Ehrlichia sennetsu), this protein is Glycerol-3-phosphate dehydrogenase [NAD(P)+].